A 241-amino-acid polypeptide reads, in one-letter code: Demethylmenaquinone methyltransferase (241 aa).

S-adenosyl-L-methionine-binding positions include threonine 60, aspartate 81, and aspartate 106 to alanine 107.

Belongs to the class I-like SAM-binding methyltransferase superfamily. MenG/UbiE family.

The enzyme catalyses a 2-demethylmenaquinol + S-adenosyl-L-methionine = a menaquinol + S-adenosyl-L-homocysteine + H(+). The protein operates within quinol/quinone metabolism; menaquinone biosynthesis; menaquinol from 1,4-dihydroxy-2-naphthoate: step 2/2. Functionally, methyltransferase required for the conversion of demethylmenaquinol (DMKH2) to menaquinol (MKH2). This is Demethylmenaquinone methyltransferase from Staphylococcus epidermidis (strain ATCC 35984 / DSM 28319 / BCRC 17069 / CCUG 31568 / BM 3577 / RP62A).